The following is a 308-amino-acid chain: uncharacterized protein (308 aa).

The 77-residue stretch at 11–87 (KRLDSLLASL…LKLEVLFEDK (77 aa)) folds into the S4 RNA-binding domain. Residue D131 is part of the active site.

This sequence belongs to the pseudouridine synthase RluA family.

It carries out the reaction a uridine in RNA = a pseudouridine in RNA. This is an uncharacterized protein from Mycoplasma genitalium (strain ATCC 33530 / DSM 19775 / NCTC 10195 / G37) (Mycoplasmoides genitalium).